The sequence spans 295 residues: Small ribosomal subunit protein uS2 (295 aa).

The interval glutamine 261–alanine 295 is disordered.

It belongs to the universal ribosomal protein uS2 family.

The protein is Small ribosomal subunit protein uS2 of Rickettsia rickettsii (strain Sheila Smith).